Consider the following 145-residue polypeptide: L-alanine exporter AlaE (145 aa).

4 helical membrane-spanning segments follow: residues 16-36 (FALV…LSGM), 42-62 (LSSR…YGLY), 86-106 (LFAY…VIGA), and 111-131 (ILTA…TYGY).

The protein belongs to the AlaE exporter family.

Its subcellular location is the cell inner membrane. Exports L-alanine. This Pectobacterium parmentieri (strain WPP163) (Pectobacterium wasabiae (strain WPP163)) protein is L-alanine exporter AlaE.